The sequence spans 252 residues: Triosephosphate isomerase (252 aa).

Asn10–Lys12 is a binding site for substrate. Residue His96 is the Electrophile of the active site. Glu168 acts as the Proton acceptor in catalysis. Residues Gly174, Ser214, and Gly235–Gly236 each bind substrate.

This sequence belongs to the triosephosphate isomerase family. In terms of assembly, homodimer.

It is found in the cytoplasm. The enzyme catalyses D-glyceraldehyde 3-phosphate = dihydroxyacetone phosphate. Its pathway is carbohydrate biosynthesis; gluconeogenesis. It functions in the pathway carbohydrate degradation; glycolysis; D-glyceraldehyde 3-phosphate from glycerone phosphate: step 1/1. Its function is as follows. Involved in the gluconeogenesis. Catalyzes stereospecifically the conversion of dihydroxyacetone phosphate (DHAP) to D-glyceraldehyde-3-phosphate (G3P). This Lactococcus lactis subsp. cremoris (strain MG1363) protein is Triosephosphate isomerase.